A 39-amino-acid polypeptide reads, in one-letter code: LIM/homeobox protein xLIM-2B (39 aa).

Positions 1 to 39 (KAKQLETLKAAFAATPKPTRHIREQLAQETGLNMRVIQV) form a DNA-binding region, homeobox.

The protein localises to the nucleus. In Xenopus laevis (African clawed frog), this protein is LIM/homeobox protein xLIM-2B (lim2b).